Reading from the N-terminus, the 267-residue chain is MSLFHLILVALIQGITEFLPVSSSGHLILLPALTGLEDQGQVIDVAVHVGTLGAVVLYFWRDVRDGLAGLPRALTGRLDTPGARLAMGLIVATIPTVLAGAALHFTGLSDALRSITVIGWTMLLFGLLLWWADRTGAQVKEATDWSLRDALILGLWQAVALIPGTSRSGITITGARAMGYTRSDGARISMLMSIPTIIASGVLLGADVAVTSDAQAARDGAIAAAFAFVSALLALSLMMRLLRSVSFTPYVIYRLALGLVLLGIAYS.

The next 7 helical transmembrane spans lie at 1-21, 40-60, 85-105, 111-131, 190-210, 219-239, and 245-265; these read MSLF…FLPV, GQVI…LYFW, LAMG…ALHF, ALRS…LLWW, MLMS…DVAV, DGAI…SLMM, and VSFT…LGIA.

This sequence belongs to the UppP family.

Its subcellular location is the cell inner membrane. The catalysed reaction is di-trans,octa-cis-undecaprenyl diphosphate + H2O = di-trans,octa-cis-undecaprenyl phosphate + phosphate + H(+). In terms of biological role, catalyzes the dephosphorylation of undecaprenyl diphosphate (UPP). Confers resistance to bacitracin. This Ruegeria pomeroyi (strain ATCC 700808 / DSM 15171 / DSS-3) (Silicibacter pomeroyi) protein is Undecaprenyl-diphosphatase.